A 445-amino-acid polypeptide reads, in one-letter code: Acyl-CoA Delta-4 desaturase (445 aa).

Positions 19–96 (AGVYTWEEVQ…MKPLLVGELA (78 aa)) constitute a Cytochrome b5 heme-binding domain. Transmembrane regions (helical) follow at residues 132-152 (LFFLLHLGHILLLEALALLMV), 153-173 (WHWGTGWLQTLLCAVMLATAQ), 266-286 (YFFLVAPPLLIPVFYNYNIMM), and 307-327 (YMLCYVPVYGLFGSLALMMFA).

The protein belongs to the fatty acid desaturase type 1 family.

It localises to the membrane. The enzyme catalyses (8Z,11Z,14Z,17Z)-eicosatetraenoyl-CoA + 2 Fe(II)-[cytochrome b5] + O2 + 2 H(+) = (5Z,8Z,11Z,14Z,17Z)-eicosapentaenoyl-CoA + 2 Fe(III)-[cytochrome b5] + 2 H2O. It catalyses the reaction (7Z,10Z,13Z,16Z)-docosatetraenoyl-CoA + 2 Fe(II)-[cytochrome b5] + O2 + 2 H(+) = (4Z,7Z,10Z,13Z,16Z)-docosapentaenoyl-CoA + 2 Fe(III)-[cytochrome b5] + 2 H2O. The catalysed reaction is (7Z,10Z,13Z,16Z,19Z)-docosapentaenoyl-CoA + 2 Fe(II)-[cytochrome b5] + O2 + 2 H(+) = (4Z,7Z,10Z,13Z,16Z,19Z)-docosahexaenoyl-CoA + 2 Fe(III)-[cytochrome b5] + 2 H2O. It participates in lipid metabolism; polyunsaturated fatty acid biosynthesis. In terms of biological role, fatty acid desaturase with bifunctional delta-4 and delta-5 activities. Component of a lipid metabolic pathway that catalyzes the biosynthesis of polyunsaturated fatty acids (PUFA) with preference toward n-3 substrates and Delta(4)function. The sequence is that of Acyl-CoA Delta-4 desaturase from Siganus canaliculatus (White-spotted spinefoot).